A 124-amino-acid polypeptide reads, in one-letter code: MKMKKYTKTHEWVSIEDKVATVGITNHAQEQLGDVVYVDLPEVGREVKKGEVVASIESVKAAADVYAPLSGKIVEVNEKLDTEPELINKDPEGEGWLFKMEISDEGELEDLLDEQAYQEFCAQE.

The Lipoyl-binding domain occupies 19–101; it reads VATVGITNHA…EGEGWLFKME (83 aa). Lysine 60 carries the post-translational modification N6-lipoyllysine.

It belongs to the GcvH family. The glycine cleavage system is composed of four proteins: P, T, L and H. (R)-lipoate is required as a cofactor.

Its function is as follows. The glycine cleavage system catalyzes the degradation of glycine. The H protein shuttles the methylamine group of glycine from the P protein to the T protein. The sequence is that of Glycine cleavage system H protein from Thermotoga maritima (strain ATCC 43589 / DSM 3109 / JCM 10099 / NBRC 100826 / MSB8).